The chain runs to 272 residues: uncharacterized protein (272 aa).

Helical transmembrane passes span 9 to 29 (PVGF…GSGV), 38 to 58 (LTSF…SFPP), 154 to 174 (AGEF…VLML), and 188 to 208 (AIAL…FNPI). The Cytoplasmic portion of the chain corresponds to 209 to 272 (AAKLEEKTES…KTKKGSVHEA (64 aa)).

Belongs to the MotA family.

It is found in the cell membrane. Functionally, may be involved in some transport function. This is an uncharacterized protein from Bacillus subtilis (strain 168).